Here is a 460-residue protein sequence, read N- to C-terminus: Squalene synthase (460 aa).

Residues 425-445 (ISILFVFFIILVCLAVIFYVF) traverse the membrane as a helical segment.

It belongs to the phytoene/squalene synthase family. Interacts with pof14. Requires Mg(2+) as cofactor.

It localises to the endoplasmic reticulum membrane. The catalysed reaction is 2 (2E,6E)-farnesyl diphosphate + NADPH + H(+) = squalene + 2 diphosphate + NADP(+). The enzyme catalyses 2 (2E,6E)-farnesyl diphosphate + NADH + H(+) = squalene + 2 diphosphate + NAD(+). It functions in the pathway terpene metabolism; lanosterol biosynthesis; lanosterol from farnesyl diphosphate: step 1/3. It participates in steroid metabolism; ergosterol biosynthesis. Squalene synthase; part of the third module of ergosterol biosynthesis pathway that includes by the late steps of the pathway. Erg9 produces squalene from 2 farnesyl pyrophosphate moieties. The third module or late pathway involves the ergosterol synthesis itself through consecutive reactions that mainly occur in the endoplasmic reticulum (ER) membrane. Firstly, the squalene synthase erg9 catalyzes the condensation of 2 farnesyl pyrophosphate moieties to form squalene, which is the precursor of all steroids. Secondly, squalene is converted into lanosterol by the consecutive action of the squalene epoxidase erg1 and the lanosterol synthase erg7. The lanosterol 14-alpha-demethylase erg11/cyp1 catalyzes C14-demethylation of lanosterol to produce 4,4'-dimethyl cholesta-8,14,24-triene-3-beta-ol. In the next steps, a complex process involving various demethylation, reduction and desaturation reactions catalyzed by the C-14 reductase erg24 and the C-4 demethylation complex erg25-erg26-erg27 leads to the production of zymosterol. Erg28 likely functions in the C-4 demethylation complex reaction by tethering erg26 and Erg27 to the endoplasmic reticulum or to facilitate interaction between these proteins. Then, the sterol 24-C-methyltransferase erg6 catalyzes the methyl transfer from S-adenosyl-methionine to the C-24 of zymosterol to form fecosterol. The C-8 sterol isomerase erg2 catalyzes the reaction which results in unsaturation at C-7 in the B ring of sterols and thus converts fecosterol to episterol. The sterol-C5-desaturases erg31 and erg32 then catalyze the introduction of a C-5 double bond in the B ring to produce 5-dehydroepisterol. The C-22 sterol desaturase erg5 further converts 5-dehydroepisterol into ergosta-5,7,22,24(28)-tetraen-3beta-ol by forming the C-22(23) double bond in the sterol side chain. Finally, ergosta-5,7,22,24(28)-tetraen-3beta-ol is substrate of the C-24(28) sterol reductase erg4 to produce ergosterol. In the genus Schizosaccharomyces, a second route exists between lanosterol and fecosterol, via the methylation of lanosterol to eburicol by erg6, followed by C14-demethylation by erg11/cyp1 and C4-demethylation by the demethylation complex erg25-erg26-erg27. The chain is Squalene synthase from Schizosaccharomyces pombe (strain 972 / ATCC 24843) (Fission yeast).